Here is a 143-residue protein sequence, read N- to C-terminus: Peptide methionine sulfoxide reductase B9 (143 aa).

The MsrB domain maps to 19 to 140 (DQDWRAILSP…NSVSLKFSEI (122 aa)). Zn(2+) is bound by residues Cys58, Cys61, Cys104, and Cys107. Cysteines 76 and 129 form a disulfide. Cys129 (nucleophile) is an active-site residue.

This sequence belongs to the MsrB Met sulfoxide reductase family. Requires Zn(2+) as cofactor.

It is found in the cytoplasm. Its subcellular location is the cytosol. It catalyses the reaction L-methionyl-[protein] + [thioredoxin]-disulfide + H2O = L-methionyl-(R)-S-oxide-[protein] + [thioredoxin]-dithiol. Its function is as follows. Catalyzes the reduction of methionine sulfoxide (MetSO) to methionine in proteins. Plays a protective role against oxidative stress by restoring activity to proteins that have been inactivated by methionine oxidation. MSRB family specifically reduces the MetSO R-enantiomer. The protein is Peptide methionine sulfoxide reductase B9 (MSRB9) of Arabidopsis thaliana (Mouse-ear cress).